The primary structure comprises 232 residues: Phosphatidylserine decarboxylase proenzyme (232 aa).

S190 serves as the catalytic Schiff-base intermediate with substrate; via pyruvic acid. S190 bears the Pyruvic acid (Ser); by autocatalysis mark.

This sequence belongs to the phosphatidylserine decarboxylase family. PSD-A subfamily. As to quaternary structure, heterodimer of a large membrane-associated beta subunit and a small pyruvoyl-containing alpha subunit. The cofactor is pyruvate. Post-translationally, is synthesized initially as an inactive proenzyme. Formation of the active enzyme involves a self-maturation process in which the active site pyruvoyl group is generated from an internal serine residue via an autocatalytic post-translational modification. Two non-identical subunits are generated from the proenzyme in this reaction, and the pyruvate is formed at the N-terminus of the alpha chain, which is derived from the carboxyl end of the proenzyme. The post-translation cleavage follows an unusual pathway, termed non-hydrolytic serinolysis, in which the side chain hydroxyl group of the serine supplies its oxygen atom to form the C-terminus of the beta chain, while the remainder of the serine residue undergoes an oxidative deamination to produce ammonia and the pyruvoyl prosthetic group on the alpha chain.

It is found in the cell membrane. The enzyme catalyses a 1,2-diacyl-sn-glycero-3-phospho-L-serine + H(+) = a 1,2-diacyl-sn-glycero-3-phosphoethanolamine + CO2. It participates in phospholipid metabolism; phosphatidylethanolamine biosynthesis; phosphatidylethanolamine from CDP-diacylglycerol: step 2/2. Catalyzes the formation of phosphatidylethanolamine (PtdEtn) from phosphatidylserine (PtdSer). The polypeptide is Phosphatidylserine decarboxylase proenzyme (Bradyrhizobium sp. (strain ORS 278)).